The chain runs to 600 residues: MSMRTEYCGLVTEHLLGQTVSLCGWVQRRRDHGGVIFIDLRDREGLVQVVCDPDRAEMFATAEGVRNEFCVQVKGLVRNRPEGTVNAGLKSGKIEVLCHELNVLNPSITPPFQLDDDNLSETTRLTHRVLDLRRPQMQHNLRLRYRVAIEARKYLDEQGFIDIETPMLTKSTPEGARDYLVPSRVNAGQFFALPQSPQLFKQLLMVANFDRYYQITKCFRDEDLRADRQPEFTQIDCETSFLGEQEIRDLFEDMIRHIFKTTINVELDAKFPVMPYSEAMARFGSDKPDLRVKLEFTELTDAMKDVDFKVFSTPANAKDGRVAALRVPKGAELSRGDIDGYTEFVRIYGAKGLAWIKVNEKAKGRDGLQSPIVKNLHDASIAAILERTGAEDGDIIFFAADRAKVVNDSLGALRLKIGHSEFGKANGLVEAGWKPLWVVDFPMFEYDDEDARYVAAHHPFTSPKDEHLEYLESDPGRCLAKAYDMVLNGWEIGGGSVRIHREDVQSKVFRALKIGAEEAQAKFGFLLDALQYGAPPHGGIAFGLDRIVTMMAGADSIRDVIAFPKTQRAQDLLTQAPSPVDERQLRELHIRLRQPEQPAS.

L-aspartate is bound at residue Glu174. The aspartate stretch occupies residues 198-201 (QLFK). Residue Arg220 participates in L-aspartate binding. ATP contacts are provided by residues 220–222 (RDE) and Gln229. His457 lines the L-aspartate pocket. Glu491 serves as a coordination point for ATP. Arg498 contacts L-aspartate. 543 to 546 (GLDR) contacts ATP.

Belongs to the class-II aminoacyl-tRNA synthetase family. Type 1 subfamily. Homodimer.

The protein localises to the cytoplasm. It carries out the reaction tRNA(Asx) + L-aspartate + ATP = L-aspartyl-tRNA(Asx) + AMP + diphosphate. In terms of biological role, aspartyl-tRNA synthetase with relaxed tRNA specificity since it is able to aspartylate not only its cognate tRNA(Asp) but also tRNA(Asn). Reaction proceeds in two steps: L-aspartate is first activated by ATP to form Asp-AMP and then transferred to the acceptor end of tRNA(Asp/Asn). This chain is Aspartate--tRNA(Asp/Asn) ligase, found in Burkholderia multivorans (strain ATCC 17616 / 249).